A 215-amino-acid chain; its full sequence is 3-isopropylmalate dehydratase small subunit (215 aa).

Belongs to the LeuD family. LeuD type 1 subfamily. In terms of assembly, heterodimer of LeuC and LeuD.

The catalysed reaction is (2R,3S)-3-isopropylmalate = (2S)-2-isopropylmalate. It functions in the pathway amino-acid biosynthesis; L-leucine biosynthesis; L-leucine from 3-methyl-2-oxobutanoate: step 2/4. Catalyzes the isomerization between 2-isopropylmalate and 3-isopropylmalate, via the formation of 2-isopropylmaleate. In Polynucleobacter necessarius subsp. necessarius (strain STIR1), this protein is 3-isopropylmalate dehydratase small subunit.